The following is a 118-amino-acid chain: MAAPPEPGEPEERKSLKLLGFLDVENTPCARHSILYGSLGSVVAGFGHFLFTSRIRRSCDVGVGGFILVTLGCWFHCRYNYAKQRIQERIAREEIKKKILYEGTHLDPERKHNGSSSN.

An N-acetylalanine modification is found at alanine 2. The Mitochondrial intermembrane portion of the chain corresponds to 2–33 (AAPPEPGEPEERKSLKLLGFLDVENTPCARHS). A helical membrane pass occupies residues 34–51 (ILYGSLGSVVAGFGHFLF). At 52-60 (TSRIRRSCD) the chain is on the mitochondrial matrix side. Residues 61–77 (VGVGGFILVTLGCWFHC) traverse the membrane as a helical segment. At 78–118 (RYNYAKQRIQERIAREEIKKKILYEGTHLDPERKHNGSSSN) the chain is on the mitochondrial intermembrane side.

The protein belongs to the COX20 family. In terms of assembly, found in a complex with TMEM177, COA6, MT-CO2/COX2, COX18, SCO1 and SCO2. Interacts with SCO1, SCO2 and COA6 in a MT-CO2/COX2- and COX18-dependent manner. Interacts with COX18 in a MT-CO2/COX2-dependent manner. Interacts with MT-CO2/COX2. Interacts with TMEM177.

It is found in the mitochondrion inner membrane. In terms of biological role, essential for the assembly of the mitochondrial respiratory chain complex IV (CIV), also known as cytochrome c oxidase. Acts as a chaperone in the early steps of cytochrome c oxidase subunit II (MT-CO2/COX2) maturation, stabilizing the newly synthesized protein and presenting it to metallochaperones SCO1/2 which in turn facilitates the incorporation of the mature MT-CO2/COX2 into the assembling CIV holoenzyme. This chain is Cytochrome c oxidase assembly protein COX20, mitochondrial (COX20), found in Homo sapiens (Human).